Here is a 417-residue protein sequence, read N- to C-terminus: Serine hydroxymethyltransferase (417 aa).

Residues L121 and 125–127 (GHL) contribute to the (6S)-5,6,7,8-tetrahydrofolate site. At K229 the chain carries N6-(pyridoxal phosphate)lysine. Residue 355–357 (SPF) participates in (6S)-5,6,7,8-tetrahydrofolate binding.

The protein belongs to the SHMT family. Homodimer. Pyridoxal 5'-phosphate serves as cofactor.

The protein localises to the cytoplasm. It carries out the reaction (6R)-5,10-methylene-5,6,7,8-tetrahydrofolate + glycine + H2O = (6S)-5,6,7,8-tetrahydrofolate + L-serine. Its pathway is one-carbon metabolism; tetrahydrofolate interconversion. The protein operates within amino-acid biosynthesis; glycine biosynthesis; glycine from L-serine: step 1/1. Catalyzes the reversible interconversion of serine and glycine with tetrahydrofolate (THF) serving as the one-carbon carrier. This reaction serves as the major source of one-carbon groups required for the biosynthesis of purines, thymidylate, methionine, and other important biomolecules. Also exhibits THF-independent aldolase activity toward beta-hydroxyamino acids, producing glycine and aldehydes, via a retro-aldol mechanism. The sequence is that of Serine hydroxymethyltransferase from Stenotrophomonas maltophilia (strain R551-3).